The sequence spans 198 residues: Na(+)-translocating NADH-quinone reductase subunit E (198 aa).

6 consecutive transmembrane segments (helical) span residues 11–31 (SVFI…FLAV), 35–55 (VSTA…AVPV), 77–97 (FLNF…LEMI), 110–130 (GIFL…SFMV), 140–160 (VVYG…LAGL), and 176–196 (LGIT…FSGI).

Belongs to the NqrDE/RnfAE family. As to quaternary structure, composed of six subunits; NqrA, NqrB, NqrC, NqrD, NqrE and NqrF.

It is found in the cell inner membrane. It catalyses the reaction a ubiquinone + n Na(+)(in) + NADH + H(+) = a ubiquinol + n Na(+)(out) + NAD(+). In terms of biological role, NQR complex catalyzes the reduction of ubiquinone-1 to ubiquinol by two successive reactions, coupled with the transport of Na(+) ions from the cytoplasm to the periplasm. NqrA to NqrE are probably involved in the second step, the conversion of ubisemiquinone to ubiquinol. This is Na(+)-translocating NADH-quinone reductase subunit E from Haemophilus ducreyi (strain 35000HP / ATCC 700724).